The following is a 286-amino-acid chain: Pantothenate synthetase (286 aa).

30–37 (MGNLHSGH) serves as a coordination point for ATP. Catalysis depends on His-37, which acts as the Proton donor. Gln-61 contributes to the (R)-pantoate binding site. Residue Gln-61 coordinates beta-alanine. 149-152 (GQKD) contributes to the ATP binding site. Residue Gln-155 participates in (R)-pantoate binding. Residues Val-178 and 186-189 (LSSR) contribute to the ATP site.

The protein belongs to the pantothenate synthetase family. As to quaternary structure, homodimer.

It is found in the cytoplasm. The catalysed reaction is (R)-pantoate + beta-alanine + ATP = (R)-pantothenate + AMP + diphosphate + H(+). It participates in cofactor biosynthesis; (R)-pantothenate biosynthesis; (R)-pantothenate from (R)-pantoate and beta-alanine: step 1/1. Catalyzes the condensation of pantoate with beta-alanine in an ATP-dependent reaction via a pantoyl-adenylate intermediate. The protein is Pantothenate synthetase of Pseudomonas fluorescens (strain Pf0-1).